We begin with the raw amino-acid sequence, 617 residues long: Proline--tRNA ligase (617 aa).

It belongs to the class-II aminoacyl-tRNA synthetase family. ProS type 1 subfamily. As to quaternary structure, homodimer.

It localises to the cytoplasm. It catalyses the reaction tRNA(Pro) + L-proline + ATP = L-prolyl-tRNA(Pro) + AMP + diphosphate. In terms of biological role, catalyzes the attachment of proline to tRNA(Pro) in a two-step reaction: proline is first activated by ATP to form Pro-AMP and then transferred to the acceptor end of tRNA(Pro). As ProRS can inadvertently accommodate and process non-cognate amino acids such as alanine and cysteine, to avoid such errors it has two additional distinct editing activities against alanine. One activity is designated as 'pretransfer' editing and involves the tRNA(Pro)-independent hydrolysis of activated Ala-AMP. The other activity is designated 'posttransfer' editing and involves deacylation of mischarged Ala-tRNA(Pro). The misacylated Cys-tRNA(Pro) is not edited by ProRS. In Streptococcus pneumoniae (strain ATCC 700669 / Spain 23F-1), this protein is Proline--tRNA ligase.